The chain runs to 130 residues: Metastasis-suppressor KiSS-1 (130 aa).

An N-terminal signal peptide occupies residues 1 to 19 (MISLASWQLLLLLCVASFG). The tract at residues 52–91 (RYAESKPGAAGLRARRTSPCPPVENPTGHQRPPCATRSRL) is disordered. Cys71 and Cys85 are oxidised to a cystine. Tyr110 is subject to Phosphotyrosine. An essential for receptor binding and receptor activation region spans residues 110-119 (YNWNSFGLRY). Tyr119 carries the tyrosine amide modification.

Belongs to the KISS1 family. As to expression, highest levels in the cecum and colon. Moderate levels present in the liver, spleen, kidney, ovary, uterus and small intestine. Low levels in the stomach, pancreas and placenta. Expressed only moderately in the placenta. Persistent expression is detected in hypothalamus throughout postnatal development, with maximum expression levels at puberty in both male and female. Hypothalamic expression is sensitive to neonatal imprinting by estrogen. Expression is higher in the hypothalamus than in the brainstem and spinal cord. In the brain, metastin-like immunoreactivity is found mainly in three groups of cells: dorsomedial hypothalamic nucleus, nucleus of the solitary tract, and caudal ventrolateral medulla.

The protein resides in the secreted. Metastasis suppressor protein. May regulate events downstream of cell-matrix adhesion, perhaps involving cytoskeletal reorganization. Generates a C-terminally amidated peptide, metastin which functions as the endogenous ligand of the G-protein coupled receptor GPR54. The receptor is also essential for normal gonadotropin-released hormone physiology and for puberty. The hypothalamic KiSS1/GPR54 system is a pivotal factor in central regulation of the gonadotropic axis at puberty and in adulthood. Intracerebroventricular administration induces an increase in serum LH and FSH levels in prepubertal male and female as well as in adult animals. This chain is Metastasis-suppressor KiSS-1 (Kiss1), found in Rattus norvegicus (Rat).